A 333-amino-acid chain; its full sequence is Serine racemase (333 aa).

Glu13 provides a ligand contact to Mg(2+). ATP is bound by residues Ser31, Ser32, Ile33, Lys51, and Thr52. Lys56 (proton acceptor) is an active-site residue. Lys56 carries the post-translational modification N6-(pyridoxal phosphate)lysine. Pro69 is a Ca(2+) binding site. Residue Thr71 is modified to Phosphothreonine. Thr81 contacts Ca(2+). Ser84 (proton acceptor) is an active-site residue. Pyridoxal 5'-phosphate is bound at residue Asn86. Gln89 provides a ligand contact to ATP. Cys113 carries the S-nitrosocysteine modification. ATP is bound at residue Tyr121. Asn154 provides a ligand contact to pyridoxal 5'-phosphate. Mg(2+) is bound at residue Asp178. Residues Gly185, Gly186, Gly187, Gly188, and Met189 each coordinate pyridoxal 5'-phosphate. Mg(2+)-binding residues include Glu210, Ala214, Asp216, and Asn247. The Ca(2+) site is built by Glu210, Ala214, Asp216, and Asn247. 3 residues coordinate Mn(2+): Glu210, Ala214, and Asp216. Position 279 (Lys279) interacts with ATP. Ser313 contacts pyridoxal 5'-phosphate. Asn316 contacts ATP.

This sequence belongs to the serine/threonine dehydratase family. As to quaternary structure, homodimer. Mg(2+) serves as cofactor. Requires Mn(2+) as cofactor. It depends on Ca(2+) as a cofactor. The cofactor is pyridoxal 5'-phosphate. S-nitrosylated, leading to decrease the enzyme activity. Expressed in the cerebellum and frontal cortex (at protein level).

It carries out the reaction L-serine = D-serine. The enzyme catalyses D-serine = pyruvate + NH4(+). It catalyses the reaction L-serine = pyruvate + NH4(+). With respect to regulation, allosterically activated by magnesium, and possibly also other divalent metal cations. Allosterically activated by ATP, ADP or GTP. Competitively inhibited by malonate. In terms of biological role, catalyzes the synthesis of D-serine from L-serine. D-serine is a key coagonist with glutamate at NMDA receptors. Has dehydratase activity towards both L-serine and D-serine. The polypeptide is Serine racemase (Srr) (Rattus norvegicus (Rat)).